The primary structure comprises 262 residues: Cell division protein FtsQ (262 aa).

Residues Met1–Tyr20 are Cytoplasmic-facing. The chain crosses the membrane as a helical span at residues Leu21–Leu41. The Periplasmic portion of the chain corresponds to Leu42 to Arg262. The 70-residue stretch at Leu52 to Gln121 folds into the POTRA domain.

This sequence belongs to the FtsQ/DivIB family. FtsQ subfamily. Part of a complex composed of FtsB, FtsL and FtsQ.

It is found in the cell inner membrane. Its function is as follows. Essential cell division protein. May link together the upstream cell division proteins, which are predominantly cytoplasmic, with the downstream cell division proteins, which are predominantly periplasmic. May control correct divisome assembly. The sequence is that of Cell division protein FtsQ from Shewanella oneidensis (strain ATCC 700550 / JCM 31522 / CIP 106686 / LMG 19005 / NCIMB 14063 / MR-1).